The chain runs to 474 residues: Solute carrier family 49 member A3 (474 aa).

A disordered region spans residues 1–20; that stretch reads MEGESAETEPLIQSSSAADR. The next 12 helical transmembrane spans lie at 38 to 58, 69 to 89, 105 to 126, 134 to 154, 175 to 195, 201 to 221, 258 to 278, 290 to 310, 326 to 346, 349 to 369, 388 to 408, and 428 to 448; these read WFIL…WLTF, LCVS…AAVV, CSLI…CGVL, VFAV…LVIF, LASM…PLIV, LFLL…LATL, WILL…STLL, GFAG…AFLL, ICMC…QLPA, VLLV…YPVG, LIFT…QALA, and VPVL…VVFF.

The protein belongs to the major facilitator superfamily.

Its subcellular location is the membrane. This Danio rerio (Zebrafish) protein is Solute carrier family 49 member A3 (slc49a3).